A 1120-amino-acid chain; its full sequence is MAVKISGVLKDGTGKPVQNCTIQLKAKRNSTTVVVNTLASENPDEAGRYSMDVEYGQYSVILLVEGFPPSHAGTITVYEDSQPGTLNDFLGAMTEDDARPEALRRFELMVEEVARNASAVAQNTAAAKKSASDASTSAREAATHAADAADSARAASTSAGQAASSAQSASSSAGTASTKATEASKSAAAAESSKSAAATSAGAAKTSETNASASLQSAATSASTATTKASEAATSARDAAASKEAAKSSETNASSSASSAASSATAAGNSAKAAKTSETNARSSETAAGQSASAAAGSKTAAASSASAASTSAGQASASATAAGKSAESAASSASTATTKAGEATEQASAAARSASAAKTSETNAKASETSAESSKTAAASSASSAASSASSASASKDEATRQASAAKSSATTASTKATEAAGSATAAAQSKSTAESAATRAETAAKRAEDIASAVALEDASTTKKGIVQLSSATNSTSETLAATPKAVKSAYDNAEKRLQKDQNGADIPDKGCFLNNINAVSKTDFADKRGMRYVRVNAPAGATSGKYYPVVVMRSAGSVSELASRVIITTATRTAGDPMNNCEFNGFVMPGGWTDRGRYAYGMFWQYQNNERAIHSIMMSNKGDDLRSVFYVDGAAFPVFAFIEDGLSISAPGADLVVNDTTYKFGATNPATECIAADVILDFKSGRGFYESHSLIVNDNLSCKKLFATDEIVARGGNQIRMIGGEYGALWRNDGAKTYLLLTNQGDVYGGWNTLRPFAIDNATGELVIGTKLSASLNGNALTATKLQTPRRVSGVEFDGSKDITLTAAHVAAFARRATDTYADADGGVPWNAESGAYNVTRSGDSYILVNFYTGVGSCRTLQMKAHYRNGGLFYRSSRDGYGFEEDWAEVYTSKNLPPESYPVGAPIPWPSDTVPSGYALMQGQAFDKSAYPKLAAAYPSGVIPDMRGWTIKGKPASGRAVLSQEQDGIKSHTHSASASSTDLGTKTTSSFDYGTKSTNNTGAHTHSVSGSTNSAGAHTHSLANVNTASANSGAGSASTRLSVVHNQNYATSSAGAHTHSLSGTAASAGAHAHTVGIGAHTHSVAIGSHGHTITVNAAGNAENTVKNIAFNYIVRLA.

Disordered regions lie at residues 129–154 (KSAS…SARA), 221–442 (SAST…ATRA), and 960–1021 (SGRA…AGAH). Composition is skewed to low complexity over residues 221–239 (SAST…ARDA), 248–395 (SSET…SASA), and 402–442 (RQAS…ATRA). Positions 985 to 1021 (DLGTKTTSSFDYGTKSTNNTGAHTHSVSGSTNSAGAH) are enriched in polar residues.

Belongs to the tail fiber family.

This Escherichia coli (strain K12) protein is Prophage side tail fiber protein homolog StfR (stfR).